The primary structure comprises 65 residues: Large ribosomal subunit protein bL35 (65 aa).

The protein belongs to the bacterial ribosomal protein bL35 family.

This Sodalis glossinidius (strain morsitans) protein is Large ribosomal subunit protein bL35.